The sequence spans 268 residues: Probable intron-encoded DNA endonuclease 1 (268 aa).

Belongs to the LAGLIDADG endonuclease family.

It localises to the mitochondrion. Functionally, mitochondrial DNA endonuclease involved in intron homing. In Mycosarcoma maydis (Corn smut fungus), this protein is Probable intron-encoded DNA endonuclease 1 (hegI1).